Here is a 173-residue protein sequence, read N- to C-terminus: Alpha-crystallin A chain (173 aa).

At methionine 1 the chain carries N-acetylmethionine. Residues 1-63 are required for complex formation with BFSP1 and BFSP2; that stretch reads MDIAIQHPWF…RTVLDSGISE (63 aa). The residue at position 6 (glutamine 6) is a Deamidated glutamine; partial. Position 45 is a phosphoserine (serine 45). The residue at position 50 (glutamine 50) is a Deamidated glutamine; partial. A sHSP domain is found at 52-162; the sequence is LFRTVLDSGI…GHSERAIPVS (111 aa). Lysine 70 is subject to N6-acetyllysine. A Deamidated glutamine; partial modification is found at glutamine 90. Lysine 99 is subject to N6-acetyllysine. Histidine 100 contacts Zn(2+). Asparagine 101 is subject to Deamidated asparagine; partial. Zn(2+) contacts are provided by glutamate 102 and histidine 107. Serine 122 is modified (phosphoserine). At asparagine 123 the chain carries Deamidated asparagine; partial. The tract at residues 144–173 is disordered; that stretch reads PKIPSGMDAGHSERAIPVSREEKPGSAPSS. The span at 153 to 167 shows a compositional bias: basic and acidic residues; the sequence is GHSERAIPVSREEKP. A Zn(2+)-binding site is contributed by histidine 154. Serine 162 is a glycosylation site (O-linked (GlcNAc) serine).

The protein belongs to the small heat shock protein (HSP20) family. As to quaternary structure, heteromer composed of three CRYAA and one CRYAB subunits. Inter-subunit bridging via zinc ions enhances stability, which is crucial as there is no protein turn over in the lens. Can also form homodimers and homotetramers (dimers of dimers) which serve as the building blocks of homooligomers. Within homooligomers, the zinc-binding motif is created from residues of 3 different molecules. His-100 and Glu-102 from one molecule are ligands of the zinc ion, and His-107 and His-154 residues from additional molecules complete the site with tetrahedral coordination geometry. Part of a complex required for lens intermediate filament formation composed of BFSP1, BFSP2 and CRYAA. Post-translationally, acetylation at Lys-70 may increase chaperone activity. Undergoes age-dependent proteolytical cleavage at the C-terminus.

It localises to the cytoplasm. Its subcellular location is the nucleus. Contributes to the transparency and refractive index of the lens. Acts as a chaperone, preventing aggregation of various proteins under a wide range of stress conditions. Required for the correct formation of lens intermediate filaments as part of a complex composed of BFSP1, BFSP2 and CRYAA. In Equus caballus (Horse), this protein is Alpha-crystallin A chain (CRYAA).